The sequence spans 350 residues: uncharacterized protein (350 aa).

Residues 164 to 327 (NDPLPGYVEV…EKTRIGARVV (164 aa)) enclose the Integrase catalytic domain.

This is an uncharacterized protein from Sinorhizobium fredii (strain NBRC 101917 / NGR234).